A 278-amino-acid polypeptide reads, in one-letter code: Sulfur carrier protein FdhD (278 aa).

The active-site Cysteine persulfide intermediate is the Cys-121. 260–265 (FCKPGR) lines the Mo-bis(molybdopterin guanine dinucleotide) pocket.

It belongs to the FdhD family.

The protein resides in the cytoplasm. In terms of biological role, required for formate dehydrogenase (FDH) activity. Acts as a sulfur carrier protein that transfers sulfur from IscS to the molybdenum cofactor prior to its insertion into FDH. This chain is Sulfur carrier protein FdhD, found in Salmonella schwarzengrund (strain CVM19633).